The following is a 264-amino-acid chain: Thymidylate synthase (264 aa).

R21 contacts dUMP. Residue H51 coordinates (6R)-5,10-methylene-5,6,7,8-tetrahydrofolate. A dUMP-binding site is contributed by 126 to 127; sequence RR. C146 serves as the catalytic Nucleophile. DUMP contacts are provided by residues 166 to 169, N177, and 207 to 209; these read RSAD and HLY. Residue D169 participates in (6R)-5,10-methylene-5,6,7,8-tetrahydrofolate binding. S263 is a binding site for (6R)-5,10-methylene-5,6,7,8-tetrahydrofolate.

The protein belongs to the thymidylate synthase family. Bacterial-type ThyA subfamily. Homodimer.

The protein localises to the cytoplasm. The enzyme catalyses dUMP + (6R)-5,10-methylene-5,6,7,8-tetrahydrofolate = 7,8-dihydrofolate + dTMP. The protein operates within pyrimidine metabolism; dTTP biosynthesis. In terms of biological role, catalyzes the reductive methylation of 2'-deoxyuridine-5'-monophosphate (dUMP) to 2'-deoxythymidine-5'-monophosphate (dTMP) while utilizing 5,10-methylenetetrahydrofolate (mTHF) as the methyl donor and reductant in the reaction, yielding dihydrofolate (DHF) as a by-product. This enzymatic reaction provides an intracellular de novo source of dTMP, an essential precursor for DNA biosynthesis. In Neisseria meningitidis serogroup A / serotype 4A (strain DSM 15465 / Z2491), this protein is Thymidylate synthase.